We begin with the raw amino-acid sequence, 832 residues long: Putative beta-glucosidase (832 aa).

The active site involves Asp-225. One can recognise a PA14 domain in the interval 397–556; that stretch reads TGKHGYVAKF…DPETEIDYAV (160 aa).

Belongs to the glycosyl hydrolase 3 family.

It is found in the cytoplasm. The enzyme catalyses Hydrolysis of terminal, non-reducing beta-D-glucosyl residues with release of beta-D-glucose.. This Schizosaccharomyces pombe (strain 972 / ATCC 24843) (Fission yeast) protein is Putative beta-glucosidase.